Reading from the N-terminus, the 619-residue chain is 1-deoxy-D-xylulose-5-phosphate synthase (619 aa).

Residues H74 and 115–117 each bind thiamine diphosphate; that span reads GHS. D146 is a binding site for Mg(2+). Thiamine diphosphate is bound by residues 147-148, N175, Y285, and E365; that span reads GA. N175 contacts Mg(2+).

Belongs to the transketolase family. DXPS subfamily. As to quaternary structure, homodimer. Mg(2+) is required as a cofactor. It depends on thiamine diphosphate as a cofactor.

It catalyses the reaction D-glyceraldehyde 3-phosphate + pyruvate + H(+) = 1-deoxy-D-xylulose 5-phosphate + CO2. It functions in the pathway metabolic intermediate biosynthesis; 1-deoxy-D-xylulose 5-phosphate biosynthesis; 1-deoxy-D-xylulose 5-phosphate from D-glyceraldehyde 3-phosphate and pyruvate: step 1/1. Its function is as follows. Catalyzes the acyloin condensation reaction between C atoms 2 and 3 of pyruvate and glyceraldehyde 3-phosphate to yield 1-deoxy-D-xylulose-5-phosphate (DXP). The protein is 1-deoxy-D-xylulose-5-phosphate synthase of Clostridium perfringens (strain ATCC 13124 / DSM 756 / JCM 1290 / NCIMB 6125 / NCTC 8237 / Type A).